The following is a 302-amino-acid chain: MTLLSSHLLVFSAVHHRAPPTTTTRNSPTTNHTVRFLCSPGVPPAVRLDQRLPRFVVPGAGAEDLLYNAGATVGVLGGGYALVRAFDELTRRNILQQGLSRKLVHILSGLLFLVSWPIFSNSPKARYFAAFVPLVNCLRLLVNGLSLASDEGLIKSVTREGDPLELLRGPLYYVLILILSALVFWRESPIGVISLAMMCAGDGIADIIGRRYGSMKIPYNEHKSLAGSMSMLVFGFLVSIGMLYYYSVLGHVQLDWASTLPRVAFISFVATLVESLPITKVVDDNISVPLATMAVAFFTFHH.

A chloroplast-targeting transit peptide spans 1 to 57 (MTLLSSHLLVFSAVHHRAPPTTTTRNSPTTNHTVRFLCSPGVPPAVRLDQRLPRFVV). 7 consecutive transmembrane segments (helical) span residues 65–83 (LLYN…YALV), 103–123 (LVHI…SNSP), 128–148 (FAAF…LSLA), 164–184 (LELL…ALVF), 189–209 (PIGV…DIIG), 232–252 (LVFG…LGHV), and 263–283 (VAFI…KVVD).

This sequence belongs to the polyprenol kinase family.

It is found in the plastid. The protein resides in the chloroplast membrane. The catalysed reaction is phytol + CTP = phytyl phosphate + CDP + H(+). It participates in cofactor biosynthesis; tocopherol biosynthesis. Its function is as follows. Involved in the activation and reutilization of phytol from chlorophyll degradation in plant metabolism, including tocopherol biosynthesis. Catalyzes the conversion of phytol to phytol monophosphate (PMP). This Glycine max (Soybean) protein is Probable phytol kinase 1, chloroplastic.